Reading from the N-terminus, the 845-residue chain is Nuclear pore complex protein Nup107 (845 aa).

2 disordered regions span residues 1 to 26 (MADSPFPRSSRSGLLRTTLNSSMPPQ) and 677 to 702 (QNRPKKPQTSHAASSQDNFTERMASE). 2 stretches are compositionally biased toward polar residues: residues 7-26 (PRSSRSGLLRTTLNSSMPPQ) and 685-694 (TSHAASSQDN).

Belongs to the nucleoporin Nup84/Nup107 family. In terms of assembly, part of the nuclear pore complex (NPC). Expressed in spermatocytes (at protein level).

The protein localises to the nucleus. Its subcellular location is the nuclear pore complex. It localises to the nucleus envelope. It is found in the nucleus membrane. The protein resides in the cytoplasm. The protein localises to the cytoskeleton. Its subcellular location is the spindle. It localises to the chromosome. It is found in the nucleus matrix. Plays a role in nuclear pore complex (NPC) assembly and maintenance. Required for nuclear import of Mad. Mediates the association between the nuclear pore complex and a subset of active chromatin regions adjacent to lamin-associated domains. Plays a role in double strand break repair by relocalizing the heterochromatic double strand breaks (DSBs) to the nuclear periphery as part of the homologous recombination (HR) repair process. Regulates cytokinesis during spermatocyte meiosis by maintaining type-B lamin Lam localization to the spindle envelope. Regulates female gonad development and oogenesis. The polypeptide is Nuclear pore complex protein Nup107 (Drosophila melanogaster (Fruit fly)).